The following is a 4650-amino-acid chain: Nonribosomal peptide synthetase lenA (4650 aa).

The tract at residues Gly-227 to Lys-628 is adenylation 1. Residues Pro-773–Glu-849 form the Carrier 1 domain. The residue at position 810 (Ser-810) is an O-(pantetheine 4'-phosphoryl)serine. A condensation 1 region spans residues Glu-890 to Gln-1212. An adenylation 2 region spans residues Glu-1288–Arg-1622. One can recognise a Carrier 2 domain in the interval Pro-1745–Asp-1822. An O-(pantetheine 4'-phosphoryl)serine modification is found at Ser-1782. The interval Ala-1850–Ala-2110 is condensation 2. Positions Arg-2183 to Gly-2511 are adenylation 3. A Carrier 3 domain is found at Ala-2630–Ser-2708. O-(pantetheine 4'-phosphoryl)serine is present on Ser-2667. Residues Glu-2722–Asn-2998 form an epimerase region. Positions Val-3128–Leu-3565 are condensation 3. The adenylation 4 stretch occupies residues Cys-3578–Lys-3980. One can recognise a Carrier 4 domain in the interval Thr-4114–Ala-4190. The residue at position 4151 (Ser-4151) is an O-(pantetheine 4'-phosphoryl)serine. Residues His-4249–Glu-4648 are condensation 4.

It belongs to the NRP synthetase family. Pantetheine 4'-phosphate serves as cofactor.

It functions in the pathway alkaloid biosynthesis. Nonribosomal peptide synthetase; part of the gene cluster that mediates the biosynthesis of the ergot alkaloids lentopeptins A and B. Within the pathway, lenA catalyzes the biosynthesis of the Ala-Val-Ala peptide chain, including a cinnamic acid moiety as the starting unit. The release of the peptide from the enzyme is accomplished via a cyclization reaction catalyzed by the terminal condensation-like (Ct) domain of lenA to form the N-acyldiketopiperazine intermediate. The reaction appears to proceed through a nucleophilic attack on the carbonyl carbon by a lone electron pair of the valine amide nitrogen. The phenylalanine ammonia-lyase lenB provides the starter unit for the synthesis of the N-acyldiketopiperazine intermediate by the NRPS lenA, while the cytochrome P450 monooxygenase lenC is involved in the post-NRPS oxidative modification steps to form lentopeptins A and B. The chain is Nonribosomal peptide synthetase lenA from Aspergillus lentulus.